The sequence spans 173 residues: MLQFATAFLAISANVVMTQPNQEYIAPGARVSSNYRDMTIRRLRTHEIGTVPEERMPIHELEIEDLITIIASKVVPELSHSESMSLLSAEAARSRSFKDMAADELDVDGALDLLKAVQSKPETTDMTPTFGVWEESNFDSATVEKLFDSKKNDENESHIKTIVEAYKKFRKEK.

A signal peptide spans 1–18 (MLQFATAFLAISANVVMT). The RxLR-dEER signature appears at 41–55 (RRLRTHEIGTVPEER). The N-linked (GlcNAc...) asparagine glycan is linked to asparagine 155.

It belongs to the RxLR effector family.

The protein localises to the secreted. The protein resides in the host cytoplasm. It localises to the host nucleus. In terms of biological role, secreted effector that suppresses pattern-triggered immunity (PTI) in plant host. In Plasmopara halstedii (Downy mildew of sunflower), this protein is Secreted RxLR effector protein RXLR-C12.